Reading from the N-terminus, the 198-residue chain is MICOS complex subunit MIC26 (198 aa).

Positions 1 to 25 (MFKVIQRSVGPASLSLLTFKVYAAP) are cleaved as a signal peptide. The helical transmembrane segment at 108 to 128 (PGFFPRLGVIGFAGLIGLLLA) threads the bilayer. The O-linked (Xyl...) (chondroitin sulfate) serine glycan is linked to S162.

This sequence belongs to the apolipoprotein O/MICOS complex subunit Mic27 family. As to quaternary structure, component of the mitochondrial contact site and cristae organizing system (MICOS) complex, composed of at least MICOS10/MIC10, CHCHD3/MIC19, CHCHD6/MIC25, APOOL/MIC27, IMMT/MIC60, APOO/MIC23/MIC26 and MICOS13/MIC13. This complex was also known under the names MINOS or MitOS complex. he MICOS complex associates with mitochondrial outer membrane proteins SAMM50, MTX1 and MTX2 (together described as components of the mitochondrial outer membrane sorting assembly machinery (SAM) complex) and DNAJC11, mitochondrial inner membrane protein TMEM11 and with HSPA9. The MICOS and SAM complexes together with DNAJC11 are part of a large protein complex spanning both membranes termed the mitochondrial intermembrane space bridging (MIB) complex. Interacts with IMMT/MIC60. Interacts with MICOS10/MIC10 and APOOL/MIC27. Post-translationally, O-glycosylation; glycosaminoglycan of chondroitin-sulfate type. Expressed in all tissues examined. Up-regulated in diabetic heart.

The protein resides in the mitochondrion inner membrane. It localises to the secreted. The protein localises to the mitochondrion. Its subcellular location is the golgi apparatus membrane. It is found in the endoplasmic reticulum membrane. In terms of biological role, component of the MICOS complex, a large protein complex of the mitochondrial inner membrane that plays crucial roles in the maintenance of crista junctions, inner membrane architecture, and formation of contact sites to the outer membrane. Plays a crucial role in crista junction formation and mitochondrial function. Can promote cardiac lipotoxicity by enhancing mitochondrial respiration and fatty acid metabolism in cardiac myoblasts. Promotes cholesterol efflux from macrophage cells. Detected in HDL, LDL and VLDL. Secreted by a microsomal triglyceride transfer protein (MTTP)-dependent mechanism, probably as a VLDL-associated protein that is subsequently transferred to HDL. The sequence is that of MICOS complex subunit MIC26 (APOO) from Homo sapiens (Human).